We begin with the raw amino-acid sequence, 313 residues long: Aspartate carbamoyltransferase catalytic subunit (313 aa).

Carbamoyl phosphate contacts are provided by Arg-51 and Thr-52. Lys-80 lines the L-aspartate pocket. 3 residues coordinate carbamoyl phosphate: Arg-101, His-129, and Gln-132. L-aspartate contacts are provided by Arg-162 and Arg-224. Carbamoyl phosphate is bound by residues Leu-263 and Pro-264.

This sequence belongs to the aspartate/ornithine carbamoyltransferase superfamily. ATCase family. As to quaternary structure, heterododecamer (2C3:3R2) of six catalytic PyrB chains organized as two trimers (C3), and six regulatory PyrI chains organized as three dimers (R2).

The enzyme catalyses carbamoyl phosphate + L-aspartate = N-carbamoyl-L-aspartate + phosphate + H(+). It participates in pyrimidine metabolism; UMP biosynthesis via de novo pathway; (S)-dihydroorotate from bicarbonate: step 2/3. In terms of biological role, catalyzes the condensation of carbamoyl phosphate and aspartate to form carbamoyl aspartate and inorganic phosphate, the committed step in the de novo pyrimidine nucleotide biosynthesis pathway. The chain is Aspartate carbamoyltransferase catalytic subunit from Phocaeicola vulgatus (strain ATCC 8482 / DSM 1447 / JCM 5826 / CCUG 4940 / NBRC 14291 / NCTC 11154) (Bacteroides vulgatus).